The sequence spans 489 residues: Cysteine--tRNA ligase (489 aa).

Residue C29 coordinates Zn(2+). The 'HIGH' region signature appears at 31–41 (ITSYDYCHIGH). 3 residues coordinate Zn(2+): C209, H234, and E238. Positions 266 to 270 (KMSKS) match the 'KMSKS' region motif. K269 is an ATP binding site.

The protein belongs to the class-I aminoacyl-tRNA synthetase family. In terms of assembly, monomer. The cofactor is Zn(2+).

The protein resides in the cytoplasm. The enzyme catalyses tRNA(Cys) + L-cysteine + ATP = L-cysteinyl-tRNA(Cys) + AMP + diphosphate. This is Cysteine--tRNA ligase from Desulfotalea psychrophila (strain LSv54 / DSM 12343).